Here is a 103-residue protein sequence, read N- to C-terminus: Putative ribosomal RNA-processing protein 7 homolog B (103 aa).

A compositionally biased stretch (basic and acidic residues) spans 1 to 19 (MEAYDQKIAEEEAKAKEEE). A disordered region spans residues 1–25 (MEAYDQKIAEEEAKAKEEEGVPDEE). Positions 71–100 (ESKMEHLAQLRKKFEEDKQRIELLRAQRKF) form a coiled coil.

The protein belongs to the RRP7 family.

The sequence is that of Putative ribosomal RNA-processing protein 7 homolog B from Homo sapiens (Human).